Reading from the N-terminus, the 432-residue chain is Glutamate-1-semialdehyde 2,1-aminomutase (432 aa).

Lys-271 carries the post-translational modification N6-(pyridoxal phosphate)lysine.

The protein belongs to the class-III pyridoxal-phosphate-dependent aminotransferase family. HemL subfamily. In terms of assembly, homodimer. Requires pyridoxal 5'-phosphate as cofactor.

The protein resides in the cytoplasm. The catalysed reaction is (S)-4-amino-5-oxopentanoate = 5-aminolevulinate. It participates in porphyrin-containing compound metabolism; protoporphyrin-IX biosynthesis; 5-aminolevulinate from L-glutamyl-tRNA(Glu): step 2/2. This Protochlamydia amoebophila (strain UWE25) protein is Glutamate-1-semialdehyde 2,1-aminomutase.